Reading from the N-terminus, the 586-residue chain is Alpha-1,2-mannosyltransferase MNN5 (586 aa).

The N-terminal stretch at 1–29 (MLIRLKKRKILQVIVSAVVLILFFCSVHN) is a signal peptide. 4 N-linked (GlcNAc...) asparagine glycosylation sites follow: asparagine 113, asparagine 136, asparagine 259, and asparagine 264.

Belongs to the MNN1/MNT family. In terms of processing, glycosylated.

It localises to the golgi apparatus. It is found in the cis-Golgi network. It functions in the pathway protein modification; protein glycosylation. Responsible for addition of first and second mannose residues to the outer chain of core N-linked polysaccharides and to O-linked mannotriose. Implicated in late Golgi modifications. This is Alpha-1,2-mannosyltransferase MNN5 (MNN5) from Saccharomyces cerevisiae (strain YJM789) (Baker's yeast).